The primary structure comprises 429 residues: UPF0761 membrane protein ABO_1543 (429 aa).

Helical transmembrane passes span 45-65 (LFAI…VPAL), 102-122 (LTVL…STVE), 141-161 (LLMY…GLAI), 184-204 (WLAV…YTVV), 216-236 (LGAA…TFFI), and 256-278 (LLWI…ALVV).

Belongs to the UPF0761 family.

The protein localises to the cell inner membrane. In Alcanivorax borkumensis (strain ATCC 700651 / DSM 11573 / NCIMB 13689 / SK2), this protein is UPF0761 membrane protein ABO_1543.